The sequence spans 298 residues: Small ribosomal subunit protein uS2 (298 aa).

A disordered region spans residues 272-298; sequence EGGDWAASSAAPAGESWAEAQPTEAKW.

It belongs to the universal ribosomal protein uS2 family. As to quaternary structure, component of the small ribosomal subunit. Mature ribosomes consist of a small (40S) and a large (60S) subunit. The 40S subunit contains about 33 different proteins and 1 molecule of RNA (18S). The 60S subunit contains about 49 different proteins and 3 molecules of RNA (25S, 5.8S and 5S). Interacts with rps21.

Its subcellular location is the cytoplasm. In terms of biological role, required for the assembly and/or stability of the 40S ribosomal subunit. Required for the processing of the 20S rRNA-precursor to mature 18S rRNA in a late step of the maturation of 40S ribosomal subunits. The sequence is that of Small ribosomal subunit protein uS2 (rps0) from Aspergillus niger (strain ATCC MYA-4892 / CBS 513.88 / FGSC A1513).